The sequence spans 227 residues: MGQKVNPIGLRVGINRTWDSRWFADETYAKLLHQDLKLRKYLREKLAQAGVSRVVIERPAKKARITIHTARPGVVIGKKGADIEVLRKELSKMTGSEVHLNIVEIRKPELDAQLVAESIAQQLERRVAFRRAMKRAVQSAMRLGAQGIRINCSGRLGGAEIARMEWYREGRVPLHTLRADVDYGVGTAHTTYGSCGVKVWVFKGEILAHDPMAQDKRAAGETAPAGR.

One can recognise a KH type-2 domain in the interval 38-106 (LRKYLREKLA…EVHLNIVEIR (69 aa)).

This sequence belongs to the universal ribosomal protein uS3 family. In terms of assembly, part of the 30S ribosomal subunit. Forms a tight complex with proteins S10 and S14.

Functionally, binds the lower part of the 30S subunit head. Binds mRNA in the 70S ribosome, positioning it for translation. This is Small ribosomal subunit protein uS3 from Paramagnetospirillum magneticum (strain ATCC 700264 / AMB-1) (Magnetospirillum magneticum).